The following is a 188-amino-acid chain: Elongation factor P (188 aa).

Belongs to the elongation factor P family.

Its subcellular location is the cytoplasm. It participates in protein biosynthesis; polypeptide chain elongation. In terms of biological role, involved in peptide bond synthesis. Stimulates efficient translation and peptide-bond synthesis on native or reconstituted 70S ribosomes in vitro. Probably functions indirectly by altering the affinity of the ribosome for aminoacyl-tRNA, thus increasing their reactivity as acceptors for peptidyl transferase. The polypeptide is Elongation factor P (Malacoplasma penetrans (strain HF-2) (Mycoplasma penetrans)).